Consider the following 259-residue polypeptide: Aspartate/glutamate leucyltransferase (259 aa).

The protein belongs to the R-transferase family. Bpt subfamily.

Its subcellular location is the cytoplasm. The catalysed reaction is N-terminal L-glutamyl-[protein] + L-leucyl-tRNA(Leu) = N-terminal L-leucyl-L-glutamyl-[protein] + tRNA(Leu) + H(+). The enzyme catalyses N-terminal L-aspartyl-[protein] + L-leucyl-tRNA(Leu) = N-terminal L-leucyl-L-aspartyl-[protein] + tRNA(Leu) + H(+). In terms of biological role, functions in the N-end rule pathway of protein degradation where it conjugates Leu from its aminoacyl-tRNA to the N-termini of proteins containing an N-terminal aspartate or glutamate. The polypeptide is Aspartate/glutamate leucyltransferase (Rhizobium meliloti (strain 1021) (Ensifer meliloti)).